A 265-amino-acid polypeptide reads, in one-letter code: 4-hydroxy-tetrahydrodipicolinate reductase (265 aa).

Residues Gly-7–Met-12, Asp-33, Gly-96–Thr-98, and Ala-120–Phe-123 each bind NAD(+). Residue His-153 is the Proton donor/acceptor of the active site. Position 154 (His-154) interacts with (S)-2,3,4,5-tetrahydrodipicolinate. The Proton donor role is filled by Lys-157. Gly-163 to Thr-164 serves as a coordination point for (S)-2,3,4,5-tetrahydrodipicolinate.

It belongs to the DapB family.

The protein resides in the cytoplasm. It catalyses the reaction (S)-2,3,4,5-tetrahydrodipicolinate + NAD(+) + H2O = (2S,4S)-4-hydroxy-2,3,4,5-tetrahydrodipicolinate + NADH + H(+). The catalysed reaction is (S)-2,3,4,5-tetrahydrodipicolinate + NADP(+) + H2O = (2S,4S)-4-hydroxy-2,3,4,5-tetrahydrodipicolinate + NADPH + H(+). The protein operates within amino-acid biosynthesis; L-lysine biosynthesis via DAP pathway; (S)-tetrahydrodipicolinate from L-aspartate: step 4/4. Functionally, catalyzes the conversion of 4-hydroxy-tetrahydrodipicolinate (HTPA) to tetrahydrodipicolinate. In Cupriavidus taiwanensis (strain DSM 17343 / BCRC 17206 / CCUG 44338 / CIP 107171 / LMG 19424 / R1) (Ralstonia taiwanensis (strain LMG 19424)), this protein is 4-hydroxy-tetrahydrodipicolinate reductase.